Consider the following 430-residue polypeptide: Adenylosuccinate synthetase (430 aa).

GTP-binding positions include glycine 12–lysine 18 and glycine 40–threonine 42. The active-site Proton acceptor is the aspartate 13. Positions 13 and 40 each coordinate Mg(2+). IMP contacts are provided by residues aspartate 13 to lysine 16, asparagine 38 to histidine 41, threonine 128, arginine 142, glutamine 223, threonine 238, and arginine 302. The active-site Proton donor is histidine 41. Threonine 298–arginine 304 provides a ligand contact to substrate. GTP contacts are provided by residues arginine 304, serine 330–aspartate 332, and serine 412–glycine 414.

It belongs to the adenylosuccinate synthetase family. As to quaternary structure, homodimer. Mg(2+) is required as a cofactor.

The protein resides in the cytoplasm. The catalysed reaction is IMP + L-aspartate + GTP = N(6)-(1,2-dicarboxyethyl)-AMP + GDP + phosphate + 2 H(+). Its pathway is purine metabolism; AMP biosynthesis via de novo pathway; AMP from IMP: step 1/2. Functionally, plays an important role in the de novo pathway of purine nucleotide biosynthesis. Catalyzes the first committed step in the biosynthesis of AMP from IMP. The chain is Adenylosuccinate synthetase from Streptococcus gordonii (strain Challis / ATCC 35105 / BCRC 15272 / CH1 / DL1 / V288).